The following is a 764-amino-acid chain: Kinesin-like protein KIN-14N (764 aa).

The disordered stretch occupies residues 1–50 (MSTRATRPGMLHQKENAADAQAGKRQRTAAGSAARAPLSANAAPPAPDPA). Low complexity predominate over residues 29-50 (AAGSAARAPLSANAAPPAPDPA). Residues 105 to 416 (AEIGKLNGLL…RLHNTILELK (312 aa)) adopt a coiled-coil conformation. Residues 418–747 (NIRVFCRVRP…LRFAARVNSC (330 aa)) form the Kinesin motor domain. ATP is bound at residue 498-505 (GQTGSGKT).

It belongs to the TRAFAC class myosin-kinesin ATPase superfamily. Kinesin family. KIN-14 subfamily.

The sequence is that of Kinesin-like protein KIN-14N from Oryza sativa subsp. japonica (Rice).